Here is a 957-residue protein sequence, read N- to C-terminus: MQLFKETKIILLSSMSSLGSGSPEEIERSWCACVLYCVSKLGNAGKAKEDRGITLRQILRAFDLKIVDFFKEMPQFCIKVGFILTGLYGSDWEKRLELQELQANLVHLCSLGRHYRRAYQELFLLNDGKPANNSSELNVQQASEYYDFGWLLFLVLRNQASSAVKNLLTSTTELVSVLAVLIIHIPVRLRNFSIEDSSCFAKKSDKGVNLIASLCERYLTSEDELSKALQKTNILIKDILKKKPCSDVSECQQGSLSFIDPEGLTFFKNFLEEDSLKSSLQVLEKEYVNGLDTKGELDARMFANEEDSLLGSGSLSGGALKLPGTKRKYDDVMASPTKSTASRAPMSPPRFCPSPNGNSFCNSKMAPFTPVSTAMTTAKWLRSTISPLPSKPSGELLRFFSACDKDVTDDITCRAAIILGAIFTGSSFGERMCTSLRNTSGMDAIWTEQRKMEALKLYYRVLESMCRAESQILSGSNLTSLLSNERFHRCMIACSAELVLATHKTVTMMFPAVLEKTGITAFDLSKVIESFVRHEDSLPRELKRHLNSLEERLLESMAWEKGSSMYNSLIVARPTLSAEINRLGLLAEPMPSLDAIAVHHDISLGGLPPLPFHKQPDKDEVRSPKRACTERRNVLVDNSFRSPVKDAIKSKFLPPLQSAFASPTRPNPAAGGETCAETGIGVFLSKITKLAAIRIKCLCERLQLSQQILERVYSLVQQIISQQTALFFNRHIDQIILCCIYGVAKISQLALTFKEIIFSYRKQSQCKPQVFRSVYVNWPSRSRSGKIGEDHVDIITFYNEVFIPTVKPLLVDLGPGTSPNRNNEPKSGGDAASFPESPRLSRFPNLPDMSPKKVSATHNVYVSPLRSSKMDTLLSPSSKSYYACVGESTHAFQSPSKDLNAINTRLNSGKKVNGRLNFDVVSDLVVARSLSDQNGSSAAAMAVFGTKTPVKGEQQDP.

The segment at 369-569 is domain A; it reads TPVSTAMTTA…EKGSSMYNSL (201 aa). A pocket region spans residues 369–808; that stretch reads TPVSTAMTTA…NEVFIPTVKP (440 aa). The segment at 570-677 is spacer; the sequence is IVARPTLSAE…PAAGGETCAE (108 aa). The interval 678-808 is domain B; sequence TGIGVFLSKI…NEVFIPTVKP (131 aa). The disordered stretch occupies residues 814–854; it reads GPGTSPNRNNEPKSGGDAASFPESPRLSRFPNLPDMSPKKV.

The protein belongs to the retinoblastoma protein (RB) family.

The protein resides in the nucleus. Functionally, regulator of biological processes that recruits a histone deacetylase to control gene transcription. May play a role in the entry into mitosis, negatively regulating the cell proliferation. Formation of stable complexes with geminiviridae replication-associated proteins may create a cellular environment which favors viral DNA replication. The chain is Retinoblastoma-related protein 1 (RBR1) from Triticum aestivum (Wheat).